The following is a 119-amino-acid chain: Short coiled-coil protein A (119 aa).

The span at 1 to 10 (MEGDVDEDDG) shows a compositional bias: acidic residues. Positions 1–26 (MEGDVDEDDGTFTNISLADDSADGEP) are disordered. A coiled-coil region spans residues 48–95 (MENQVEQEEKTRLINQVLELQHTLEDLSARVDAVKEENLKLKSENQVL).

Belongs to the SCOC family.

Its subcellular location is the golgi apparatus membrane. It is found in the golgi apparatus. The protein resides in the trans-Golgi network. It localises to the cytoplasm. The protein localises to the cytosol. Functionally, positive regulator of amino acid starvation-induced autophagy. The protein is Short coiled-coil protein A (scoca) of Danio rerio (Zebrafish).